We begin with the raw amino-acid sequence, 175 residues long: Shikimate kinase (175 aa).

ATP is bound at residue 10-15 (GAGKTT). Threonine 14 contributes to the Mg(2+) binding site. Positions 32, 56, and 78 each coordinate substrate. Position 116 (arginine 116) interacts with ATP. Arginine 135 contacts substrate.

The protein belongs to the shikimate kinase family. As to quaternary structure, monomer. It depends on Mg(2+) as a cofactor.

The protein resides in the cytoplasm. It catalyses the reaction shikimate + ATP = 3-phosphoshikimate + ADP + H(+). It participates in metabolic intermediate biosynthesis; chorismate biosynthesis; chorismate from D-erythrose 4-phosphate and phosphoenolpyruvate: step 5/7. Its function is as follows. Catalyzes the specific phosphorylation of the 3-hydroxyl group of shikimic acid using ATP as a cosubstrate. This is Shikimate kinase from Aromatoleum aromaticum (strain DSM 19018 / LMG 30748 / EbN1) (Azoarcus sp. (strain EbN1)).